Reading from the N-terminus, the 334-residue chain is Transcription initiation factor IIB (334 aa).

The TFIIB-type zinc-finger motif lies at 34–65 (EELVCPMCDSKNIIKDYEKAEIVCEDCGCVLQ). Residues Cys38, Cys41, Cys57, and Cys60 each contribute to the Zn(2+) site. 2 repeat units span residues 151 to 234 (SELD…SREL) and 245 to 326 (DYVP…ELTE).

The protein belongs to the TFIIB family.

Its function is as follows. Stabilizes TBP binding to an archaeal box-A promoter. Also responsible for recruiting RNA polymerase II to the pre-initiation complex (DNA-TBP-TFIIB). The polypeptide is Transcription initiation factor IIB (Methanococcus aeolicus (strain ATCC BAA-1280 / DSM 17508 / OCM 812 / Nankai-3)).